Here is a 61-residue protein sequence, read N- to C-terminus: Peroxidase 1 (61 aa).

Residues 1–32 (DNTAKEKDSPANLSLRTCAAGDNAEQPLDPSR) form a disordered region. N-linked (GlcNAc...) asparagine glycosylation is present at asparagine 12. The Ca(2+) site is built by aspartate 29, serine 31, and aspartate 36.

It belongs to the peroxidase family. Classical plant (class III) peroxidase subfamily. It depends on Ca(2+) as a cofactor. Heme b is required as a cofactor.

It is found in the secreted. The catalysed reaction is 2 a phenolic donor + H2O2 = 2 a phenolic radical donor + 2 H2O. Functionally, removal of H(2)O(2), oxidation of toxic reductants, biosynthesis and degradation of lignin, suberization, auxin catabolism, response to environmental stresses such as wounding, pathogen attack and oxidative stress. These functions might be dependent on each isozyme/isoform in each plant tissue. The protein is Peroxidase 1 of Vitis rotundifolia (Muscadine grape).